Reading from the N-terminus, the 281-residue chain is Ribosomal RNA small subunit methyltransferase A (281 aa).

S-adenosyl-L-methionine contacts are provided by Asn36, Leu38, Gly63, Glu84, Asp109, and Asn127.

The protein belongs to the class I-like SAM-binding methyltransferase superfamily. rRNA adenine N(6)-methyltransferase family. RsmA subfamily.

The protein resides in the cytoplasm. It carries out the reaction adenosine(1518)/adenosine(1519) in 16S rRNA + 4 S-adenosyl-L-methionine = N(6)-dimethyladenosine(1518)/N(6)-dimethyladenosine(1519) in 16S rRNA + 4 S-adenosyl-L-homocysteine + 4 H(+). Its function is as follows. Specifically dimethylates two adjacent adenosines (A1518 and A1519) in the loop of a conserved hairpin near the 3'-end of 16S rRNA in the 30S particle. May play a critical role in biogenesis of 30S subunits. This Borreliella burgdorferi (strain ATCC 35210 / DSM 4680 / CIP 102532 / B31) (Borrelia burgdorferi) protein is Ribosomal RNA small subunit methyltransferase A.